We begin with the raw amino-acid sequence, 256 residues long: Type III pantothenate kinase (256 aa).

ATP is bound at residue 6 to 13 (DVGNTNTV). Substrate contacts are provided by residues tyrosine 100 and 107–110 (GADR). Aspartate 109 functions as the Proton acceptor in the catalytic mechanism. K(+) is bound at residue aspartate 129. Threonine 132 is a binding site for ATP. Residue threonine 184 coordinates substrate.

It belongs to the type III pantothenate kinase family. In terms of assembly, homodimer. NH4(+) serves as cofactor. K(+) is required as a cofactor.

The protein localises to the cytoplasm. It carries out the reaction (R)-pantothenate + ATP = (R)-4'-phosphopantothenate + ADP + H(+). It participates in cofactor biosynthesis; coenzyme A biosynthesis; CoA from (R)-pantothenate: step 1/5. Its function is as follows. Catalyzes the phosphorylation of pantothenate (Pan), the first step in CoA biosynthesis. The polypeptide is Type III pantothenate kinase (Myxococcus xanthus (strain DK1622)).